The chain runs to 439 residues: 3-phosphoshikimate 1-carboxyvinyltransferase (439 aa).

The 3-phosphoshikimate site is built by Lys25, Ser26, and Arg30. Lys25 contacts phosphoenolpyruvate. Residues Gly96 and Arg124 each contribute to the phosphoenolpyruvate site. 6 residues coordinate 3-phosphoshikimate: Ser170, Ser171, Gln172, Ser202, Asp324, and Lys351. Gln172 contacts phosphoenolpyruvate. The active-site Proton acceptor is Asp324. Residues Arg355, Arg399, and Lys424 each contribute to the phosphoenolpyruvate site.

Belongs to the EPSP synthase family. Monomer.

The protein resides in the cytoplasm. The catalysed reaction is 3-phosphoshikimate + phosphoenolpyruvate = 5-O-(1-carboxyvinyl)-3-phosphoshikimate + phosphate. Its pathway is metabolic intermediate biosynthesis; chorismate biosynthesis; chorismate from D-erythrose 4-phosphate and phosphoenolpyruvate: step 6/7. Catalyzes the transfer of the enolpyruvyl moiety of phosphoenolpyruvate (PEP) to the 5-hydroxyl of shikimate-3-phosphate (S3P) to produce enolpyruvyl shikimate-3-phosphate and inorganic phosphate. This chain is 3-phosphoshikimate 1-carboxyvinyltransferase, found in Bordetella avium (strain 197N).